Reading from the N-terminus, the 221-residue chain is Ependymin-2 (221 aa).

Positions 1–21 (MQDFAFAALSIWLCLGATALA) are cleaved as a signal peptide. Residues Asn33, Asn73, and Asn97 are each glycosylated (N-linked (GlcNAc...) asparagine).

Belongs to the ependymin family. In terms of processing, binds calcium through the terminal sialic acids. In terms of tissue distribution, EPDs are synthesized in the meninx and secreted in the cerebrospinal fluid.

It localises to the secreted. Functionally, may play a role in neural plasticity. May be involved during axon regeneration. This chain is Ependymin-2 (epd2), found in Salmo salar (Atlantic salmon).